Here is a 397-residue protein sequence, read N- to C-terminus: Succinate--CoA ligase [ADP-forming] subunit beta (397 aa).

The ATP-grasp domain maps to 9–254 (KALLKSFGAP…TTEEDEKEIE (246 aa)). ATP contacts are provided by residues Lys46, 53–55 (GRG), Glu109, Ala112, and Glu117. Mg(2+)-binding residues include Asn209 and Asp223. Residues Asn274 and 331 to 333 (GIM) each bind substrate.

Belongs to the succinate/malate CoA ligase beta subunit family. Heterotetramer of two alpha and two beta subunits. Requires Mg(2+) as cofactor.

It catalyses the reaction succinate + ATP + CoA = succinyl-CoA + ADP + phosphate. The catalysed reaction is GTP + succinate + CoA = succinyl-CoA + GDP + phosphate. It functions in the pathway carbohydrate metabolism; tricarboxylic acid cycle; succinate from succinyl-CoA (ligase route): step 1/1. Functionally, succinyl-CoA synthetase functions in the citric acid cycle (TCA), coupling the hydrolysis of succinyl-CoA to the synthesis of either ATP or GTP and thus represents the only step of substrate-level phosphorylation in the TCA. The beta subunit provides nucleotide specificity of the enzyme and binds the substrate succinate, while the binding sites for coenzyme A and phosphate are found in the alpha subunit. This is Succinate--CoA ligase [ADP-forming] subunit beta from Mesorhizobium japonicum (strain LMG 29417 / CECT 9101 / MAFF 303099) (Mesorhizobium loti (strain MAFF 303099)).